The chain runs to 92 residues: Translation initiation factor IF-1 (92 aa).

Residues 1 to 72 enclose the S1-like domain; that stretch reads MAKEELIQFE…EKGRLIFRHK (72 aa). A disordered region spans residues 69-92; sequence FRHKDERPGGPPRSGPPRGQFRRR.

Belongs to the IF-1 family. As to quaternary structure, component of the 30S ribosomal translation pre-initiation complex which assembles on the 30S ribosome in the order IF-2 and IF-3, IF-1 and N-formylmethionyl-tRNA(fMet); mRNA recruitment can occur at any time during PIC assembly.

Its subcellular location is the cytoplasm. In terms of biological role, one of the essential components for the initiation of protein synthesis. Stabilizes the binding of IF-2 and IF-3 on the 30S subunit to which N-formylmethionyl-tRNA(fMet) subsequently binds. Helps modulate mRNA selection, yielding the 30S pre-initiation complex (PIC). Upon addition of the 50S ribosomal subunit IF-1, IF-2 and IF-3 are released leaving the mature 70S translation initiation complex. The protein is Translation initiation factor IF-1 of Rhodopseudomonas palustris (strain ATCC BAA-98 / CGA009).